A 331-amino-acid polypeptide reads, in one-letter code: Protein Brevis radix-like 1 (331 aa).

The segment at 1–111 is disordered; that stretch reads MFTCINCTKM…HQSGRPDSRF (111 aa). 2 stretches are compositionally biased toward polar residues: residues 25-41 and 48-66; these read STTP…TTQI and FSGS…SSNL. In terms of domain architecture, BRX 1 spans 137–192; the sequence is KEWMAQVEPGVHITFVSLPSGGNDLKRIRFSREVFDKWQAQRWWGENYDRIVELYN. 2 disordered regions span residues 201-246 and 258-279; these read LQTP…VPHH and TTSS…GEWV. Residues 221–235 are compositionally biased toward basic and acidic residues; sequence DSARESRDWTQRDNN. Positions 276–331 constitute a BRX 2 domain; it reads GEWVEEDEPGVYITIRQLPDGTRELRRVRFSRERFGEVHAKTWWEQNRDRIQTQYL.

The protein belongs to the BRX family. Heterodimer with BRXL1. As to expression, expressed in roots.

It localises to the nucleus. In terms of biological role, may act as a regulator of cell proliferation and elongation in the root. The polypeptide is Protein Brevis radix-like 1 (BRXL1) (Arabidopsis thaliana (Mouse-ear cress)).